The primary structure comprises 296 residues: uncharacterized protein (296 aa).

The transit peptide at 1 to 57 (MTSFLSFSAISAHPPTFSGASFRPRSFSPRLFKSCVKCTYAEAGLSSASWSAPIDIV) directs the protein to the chloroplast.

It belongs to the NAD(P)-dependent epimerase/dehydratase family.

The protein resides in the plastid. It localises to the chloroplast. It is found in the plastoglobule. This is an uncharacterized protein from Arabidopsis thaliana (Mouse-ear cress).